A 426-amino-acid chain; its full sequence is Protein arginine methyltransferase NDUFAF7 homolog, mitochondrial (426 aa).

It belongs to the NDUFAF7 family.

The protein resides in the mitochondrion. It catalyses the reaction L-arginyl-[protein] + 2 S-adenosyl-L-methionine = N(omega),N(omega)'-dimethyl-L-arginyl-[protein] + 2 S-adenosyl-L-homocysteine + 2 H(+). Arginine methyltransferase involved in the assembly or stability of mitochondrial NADH:ubiquinone oxidoreductase complex (complex I). The protein is Protein arginine methyltransferase NDUFAF7 homolog, mitochondrial of Caenorhabditis elegans.